A 263-amino-acid polypeptide reads, in one-letter code: ATP synthase subunit a (263 aa).

6 consecutive transmembrane segments (helical) span residues valine 26–serine 46, valine 86–isoleucine 106, aspartate 130–isoleucine 150, proline 166–alanine 186, leucine 195–alanine 215, and leucine 229–leucine 249.

It belongs to the ATPase A chain family. As to quaternary structure, F-type ATPases have 2 components, CF(1) - the catalytic core - and CF(0) - the membrane proton channel. CF(1) has five subunits: alpha(3), beta(3), gamma(1), delta(1), epsilon(1). CF(0) has three main subunits: a(1), b(2) and c(9-12). The alpha and beta chains form an alternating ring which encloses part of the gamma chain. CF(1) is attached to CF(0) by a central stalk formed by the gamma and epsilon chains, while a peripheral stalk is formed by the delta and b chains.

It localises to the cell inner membrane. Key component of the proton channel; it plays a direct role in the translocation of protons across the membrane. The sequence is that of ATP synthase subunit a from Glaesserella parasuis serovar 5 (strain SH0165) (Haemophilus parasuis).